The following is a 123-amino-acid chain: Large ribosomal subunit protein bL19 (123 aa).

It belongs to the bacterial ribosomal protein bL19 family.

Its function is as follows. This protein is located at the 30S-50S ribosomal subunit interface and may play a role in the structure and function of the aminoacyl-tRNA binding site. The polypeptide is Large ribosomal subunit protein bL19 (Thermomicrobium roseum (strain ATCC 27502 / DSM 5159 / P-2)).